A 583-amino-acid chain; its full sequence is Scarecrow-like protein 30 (583 aa).

2 disordered regions span residues 107–154 (GDLE…RKSK) and 182–205 (EATE…KSDQ). Over residues 115 to 124 (GNFSSITSLH) the composition is skewed to polar residues. Residues 131-140 (ESTRRYRHRD) show a composition bias toward basic and acidic residues. A GRAS domain is found at 200–579 (QQKSDQPVDM…RVLYAVSCWK (380 aa)). Residues 207-266 (VDMRNLLMQCAQAVASFDQRRAFEKLKEIREHSSRHGDATQRLGYHFAEALEARITGTMT) are leucine repeat I (LRI). Residues 285 to 350 (YKGFVQACPT…IGPPLLRVTG (66 aa)) form a VHIID region. The short motif at 316 to 320 (LHIID) is the VHIID element. Residues 366-398 (ETGRRLKRFCDKFNVPFEYSFIAKNWENITLDD) are leucine repeat II (LRII). The segment at 407 to 501 (TVVNCILRLQ…RELIIRDAMS (95 aa)) is PFYRE. The SAW stretch occupies residues 504 to 579 (ACEGSERFAR…RVLYAVSCWK (76 aa)).

This sequence belongs to the GRAS family. In terms of assembly, interacts with SNRNP35 and CYP95. In terms of tissue distribution, expressed in seedlings, leaves, sepals, stamen and pistil, and in the quiescent center of root meristem.

Its subcellular location is the nucleus. Its function is as follows. Probable transcription factor involved in plant development. This chain is Scarecrow-like protein 30 (SCL30), found in Arabidopsis thaliana (Mouse-ear cress).